Consider the following 257-residue polypeptide: Regulator of G-protein signaling 7-binding protein (257 aa).

The tract at residues 1-45 (MSSAPNGRKKRPSRSTRSSIFQISKPPLQTGDWERRGSGSESAHK) is disordered. Positions 32 to 45 (DWERRGSGSESAHK) are enriched in basic and acidic residues. The Nuclear localization signal signature appears at 242-247 (RRRKRR). S-palmitoyl cysteine attachment occurs at residues Cys-252 and Cys-253.

Belongs to the RGS7BP/RGS9BP family. In terms of assembly, interacts with 'R7' family proteins RGS6, RGS7, RGS9 and RGS11. Component of some R7-Gbeta5 complex composed of some R7 protein (RGS6, RGS7, RGS9 or RGS11), Gbeta5 (GNB5) and RGS7BP. Palmitoylated. Undergoes rapid palmitoylation turnover. De novo and turnover palmitoylation are both mediated by ZDHHC2. Palmitoylation regulates the cell membrane and nuclear shuttling and the regulation of GPCR signaling. Upon depalmitoylation, it is targeted from the plasma membrane into the nucleus. GPCR signaling inhibits depalmitoylation and promotes localization to the plasma membrane.

It is found in the nucleus. The protein localises to the cytoplasm. The protein resides in the cell membrane. Functionally, regulator of G protein-coupled receptor (GPCR) signaling. Regulatory subunit of the R7-Gbeta5 complexes that acts by controlling the subcellular location of the R7-Gbeta5 complexes. When palmitoylated, it targets the R7-Gbeta5 complexes to the plasma membrane, leading to inhibit G protein alpha subunits. When it is unpalmitoylated, the R7-Gbeta5 complexes undergo a nuclear/cytoplasmic shuttling. May also act by controlling the proteolytic stability of R7 proteins, probably by protecting them from degradation. The protein is Regulator of G-protein signaling 7-binding protein (RGS7BP) of Bos taurus (Bovine).